The following is a 310-amino-acid chain: Solute carrier family 25 member 47 (310 aa).

Solcar repeat units follow at residues 1 to 80, 93 to 208, and 217 to 304; these read MDFV…CLAH, PTKA…LCEW, and PDVL…VLRL. 6 helical membrane-spanning segments follow: residues 3–23, 55–75, 98–114, 194–210, 219–239, and 280–298; these read FVAGAIGGVCGVAVGYPLDTV, GLSLPVCTVSLVSSVSFGTYH, ITLSGCASGLVRVFLTS, SFATYFLSYAMLCEWLT, VLGVLVAGGCAGVLAWAVATP, and LALNCCRAFPVNMVVFVAY.

It belongs to the mitochondrial carrier (TC 2.A.29) family. As to expression, specifically expressed in liver (at protein level).

The protein localises to the mitochondrion inner membrane. It is found in the mitochondrion outer membrane. It carries out the reaction NAD(+)(in) = NAD(+)(out). The catalysed reaction is acetyl-CoA(in) = acetyl-CoA(out). Mitochondrial NAD(+) transporter that acts as a 'metabolic gate' in hepatic lipogenesis. Provides NAD(+) substrate to mitochondrial SIRT3 deacetylase and enables its NAD(+)-dependent activities in mitochondrial energy metabolism. This triggers downstream activation of PRKAA1/AMPK-alpha signaling cascade that negatively regulates sterol regulatory element-binding protein (SREBP) transcriptional activities and ATP-consuming lipogenesis to restore cellular energy balance. May transport other mitochondrial metabolites having an aromatic nucleotide and phosphate groups, such as acetyl-CoA. Does not transport amino acids. The transport mechanism remains to be elucidated. The protein is Solute carrier family 25 member 47 of Mus musculus (Mouse).